Here is a 238-residue protein sequence, read N- to C-terminus: Uridylate kinase (238 aa).

12 to 15 (KLSG) contacts ATP. Gly-54 lines the UMP pocket. ATP-binding residues include Gly-55 and Arg-59. UMP is bound by residues Asp-74 and 135–142 (TGNPYFST). 2 residues coordinate ATP: Tyr-168 and Asp-171.

The protein belongs to the UMP kinase family. Homohexamer.

Its subcellular location is the cytoplasm. The catalysed reaction is UMP + ATP = UDP + ADP. Its pathway is pyrimidine metabolism; CTP biosynthesis via de novo pathway; UDP from UMP (UMPK route): step 1/1. With respect to regulation, inhibited by UTP. Catalyzes the reversible phosphorylation of UMP to UDP. This chain is Uridylate kinase, found in Syntrophomonas wolfei subsp. wolfei (strain DSM 2245B / Goettingen).